A 758-amino-acid polypeptide reads, in one-letter code: Zinc finger protein VAR3, chloroplastic (758 aa).

The tract at residues 122–502 (FPGFPDELLR…PKEETQIGLI (381 aa)) is 3 X approximate repeat. 2 consecutive RanBP2-type zinc fingers follow at residues 276–305 (KRGD…ARPK) and 308–338 (LTGS…KRPR). The stretch at 368–415 (RWLSKVAQGGSDANSVDTDEDFPEIMPLRKGVNRYVVSTRKPPLERRL) is repeat 1. Disordered stretches follow at residues 410 to 470 (PLER…RFES), 512 to 545 (GGNQ…SEEP), 572 to 606 (EKMP…DSDF), 629 to 654 (TLPA…INKS), and 727 to 758 (KRKT…KGDK). Basic and acidic residues-rich tracts occupy residues 457–469 (RSDD…RRFE), 519–545 (QEDK…SEEP), and 572–581 (EKMPMRKGEN). Residues 547 to 596 (RWFKRVTELHNVSDLESAIPQEISPEKMPMRKGENRFVVSRKKDRSLTSP) form repeat 2. The stretch at 688-736 (RWFKRVAEIKNISELSEIPDEDFPSIMPMRKGVNRFVVSKRKTPLERRL) is repeat 3.

In terms of assembly, interacts in vitro with the chloroplast-located protein CCD4/NCED4. Homodimer. Interacts with ORRM1. Interacts with PCMP-H51/CRR28 and PCMP-H12/OTP82. Interacts with ORRM6. In terms of tissue distribution, weakly expressed in leaves and roots.

The protein resides in the plastid. It localises to the chloroplast. Probable component of some protein complex required for chloroplast and palisade cell development. Involved in C-to-U editing of chloroplastic RNA. Controls a large number of chloroplastic editing sites. Binds the editing recognition trans-factors PCMP-H51/CRR28 and PCMP-H12/OTP82. The sequence is that of Zinc finger protein VAR3, chloroplastic from Arabidopsis thaliana (Mouse-ear cress).